A 496-amino-acid chain; its full sequence is Glycerol kinase (496 aa).

Residue T12 coordinates ADP. T12, T13, and S14 together coordinate ATP. T12 is a sn-glycerol 3-phosphate binding site. Position 16 (R16) interacts with ADP. Residues R82, E83, and Y134 each contribute to the sn-glycerol 3-phosphate site. R82, E83, and Y134 together coordinate glycerol. H230 carries the post-translational modification Phosphohistidine; by HPr. A sn-glycerol 3-phosphate-binding site is contributed by D244. Residues D244 and Q245 each coordinate glycerol. Positions 266 and 309 each coordinate ADP. T266, G309, Q313, and G410 together coordinate ATP. Positions 410 and 414 each coordinate ADP.

The protein belongs to the FGGY kinase family. As to quaternary structure, homotetramer and homodimer (in equilibrium). In terms of processing, the phosphoenolpyruvate-dependent sugar phosphotransferase system (PTS), including enzyme I, and histidine-containing protein (HPr) are required for the phosphorylation, which leads to the activation of the enzyme.

The enzyme catalyses glycerol + ATP = sn-glycerol 3-phosphate + ADP + H(+). It functions in the pathway polyol metabolism; glycerol degradation via glycerol kinase pathway; sn-glycerol 3-phosphate from glycerol: step 1/1. Its activity is regulated as follows. Activated by phosphorylation and inhibited by fructose 1,6-bisphosphate (FBP). Key enzyme in the regulation of glycerol uptake and metabolism. Catalyzes the phosphorylation of glycerol to yield sn-glycerol 3-phosphate. This is Glycerol kinase from Geobacillus kaustophilus (strain HTA426).